The primary structure comprises 163 residues: Neurotrophin-3 (163 aa).

The first 3 residues, 1–3 (IQS), serve as a signal peptide directing secretion. Residues 4–119 (TSMDQGILTE…ALNRTSRRKR (116 aa)) constitute a propeptide that is removed on maturation. Disordered stretches follow at residues 38 to 60 (ARTKDGTQTTVKKSEAEADATAS) and 90 to 131 (LLSE…YSVC). Asparagine 112 carries N-linked (GlcNAc...) asparagine glycosylation.

It belongs to the NGF-beta family.

The protein localises to the secreted. Functionally, seems to promote the survival of visceral and proprioceptive sensory neurons. This chain is Neurotrophin-3 (NTF3), found in Eunectes notaeus (Yellow anaconda).